A 233-amino-acid chain; its full sequence is Small ribosomal subunit protein uS2 (233 aa).

It belongs to the universal ribosomal protein uS2 family.

This chain is Small ribosomal subunit protein uS2, found in Clostridium botulinum (strain Hall / ATCC 3502 / NCTC 13319 / Type A).